The chain runs to 760 residues: Xaa-Pro dipeptidyl-peptidase (760 aa).

Catalysis depends on charge relay system residues Ser-349, Asp-469, and His-499.

It belongs to the peptidase S15 family. In terms of assembly, homodimer.

Its subcellular location is the cytoplasm. It catalyses the reaction Hydrolyzes Xaa-Pro-|- bonds to release unblocked, N-terminal dipeptides from substrates including Ala-Pro-|-p-nitroanilide and (sequentially) Tyr-Pro-|-Phe-Pro-|-Gly-Pro-|-Ile.. Its function is as follows. Removes N-terminal dipeptides sequentially from polypeptides having unsubstituted N-termini provided that the penultimate residue is proline. The protein is Xaa-Pro dipeptidyl-peptidase of Streptococcus pyogenes serotype M2 (strain MGAS10270).